The sequence spans 133 residues: Arginine decarboxylase proenzyme (133 aa).

The Schiff-base intermediate with substrate; via pyruvic acid role is filled by Ser81. Pyruvic acid (Ser); by autocatalysis is present on Ser81. The active-site Proton acceptor; for processing activity is the His86. Catalysis depends on Cys101, which acts as the Proton donor; for catalytic activity.

The protein belongs to the prokaryotic AdoMetDC family. Type 1 subfamily. In terms of assembly, heterooctamer of four alpha and four beta chains arranged as a tetramer of alpha/beta heterodimers. Pyruvate serves as cofactor. In terms of processing, is synthesized initially as an inactive proenzyme. Formation of the active enzyme involves a self-maturation process in which the active site pyruvoyl group is generated from an internal serine residue via an autocatalytic post-translational modification. Two non-identical subunits are generated from the proenzyme in this reaction, and the pyruvate is formed at the N-terminus of the alpha chain, which is derived from the carboxyl end of the proenzyme. The post-translation cleavage follows an unusual pathway, termed non-hydrolytic serinolysis, in which the side chain hydroxyl group of the serine supplies its oxygen atom to form the C-terminus of the beta chain, while the remainder of the serine residue undergoes an oxidative deamination to produce ammonia and the pyruvoyl group blocking the N-terminus of the alpha chain.

The enzyme catalyses L-arginine + H(+) = agmatine + CO2. It participates in amine and polyamine biosynthesis; agmatine biosynthesis; agmatine from L-arginine: step 1/1. Its function is as follows. Specifically catalyzes the decarboxylation of L-arginine to agmatine. Has no S-adenosylmethionine decarboxylase (AdoMetDC) activity. The protein is Arginine decarboxylase proenzyme of Pyrobaculum arsenaticum (strain DSM 13514 / JCM 11321 / PZ6).